The following is a 337-amino-acid chain: tRNA-dihydrouridine synthase B (337 aa).

FMN-binding positions include 19–21 and Q73; that span reads PMA. C103 serves as the catalytic Proton donor. Residues K142, 203 to 205, and 227 to 228 contribute to the FMN site; these read NGD and GR.

Belongs to the Dus family. DusB subfamily. FMN is required as a cofactor.

It carries out the reaction a 5,6-dihydrouridine in tRNA + NAD(+) = a uridine in tRNA + NADH + H(+). The catalysed reaction is a 5,6-dihydrouridine in tRNA + NADP(+) = a uridine in tRNA + NADPH + H(+). Functionally, catalyzes the synthesis of 5,6-dihydrouridine (D), a modified base found in the D-loop of most tRNAs, via the reduction of the C5-C6 double bond in target uridines. The polypeptide is tRNA-dihydrouridine synthase B (Pseudomonas syringae pv. tomato (strain ATCC BAA-871 / DC3000)).